The following is a 383-amino-acid chain: S-adenosylmethionine synthase (383 aa).

Position 15 (His15) interacts with ATP. Asp17 contributes to the Mg(2+) binding site. Glu43 is a binding site for K(+). Glu56 and Gln99 together coordinate L-methionine. Residues 99-109 (QSPDINQGVDR) are flexible loop. ATP contacts are provided by residues 164-166 (DAK), 230-231 (RF), Asp239, 245-246 (RK), Ala262, and Lys266. Asp239 is an L-methionine binding site. Lys270 contacts L-methionine.

Belongs to the AdoMet synthase family. As to quaternary structure, homotetramer; dimer of dimers. Requires Mg(2+) as cofactor. The cofactor is K(+).

Its subcellular location is the cytoplasm. It carries out the reaction L-methionine + ATP + H2O = S-adenosyl-L-methionine + phosphate + diphosphate. The protein operates within amino-acid biosynthesis; S-adenosyl-L-methionine biosynthesis; S-adenosyl-L-methionine from L-methionine: step 1/1. Functionally, catalyzes the formation of S-adenosylmethionine (AdoMet) from methionine and ATP. The overall synthetic reaction is composed of two sequential steps, AdoMet formation and the subsequent tripolyphosphate hydrolysis which occurs prior to release of AdoMet from the enzyme. This is S-adenosylmethionine synthase from Shewanella baltica (strain OS155 / ATCC BAA-1091).